Reading from the N-terminus, the 189-residue chain is Elongation factor P (189 aa).

Position 34 is an N6-(3,6-diaminohexanoyl)-5-hydroxylysine (lysine 34).

This sequence belongs to the elongation factor P family. Post-translationally, may be beta-lysylated on the epsilon-amino group of Lys-34 by the combined action of EpmA and EpmB, and then hydroxylated on the C5 position of the same residue by EpmC (if this protein is present). Lysylation is critical for the stimulatory effect of EF-P on peptide-bond formation. The lysylation moiety may extend toward the peptidyltransferase center and stabilize the terminal 3-CCA end of the tRNA. Hydroxylation of the C5 position on Lys-34 may allow additional potential stabilizing hydrogen-bond interactions with the P-tRNA.

Its subcellular location is the cytoplasm. Its pathway is protein biosynthesis; polypeptide chain elongation. Functionally, involved in peptide bond synthesis. Alleviates ribosome stalling that occurs when 3 or more consecutive Pro residues or the sequence PPG is present in a protein, possibly by augmenting the peptidyl transferase activity of the ribosome. Modification of Lys-34 is required for alleviation. This chain is Elongation factor P, found in Legionella pneumophila (strain Paris).